The primary structure comprises 831 residues: Multiphosphoryl transfer protein 1 (831 aa).

In terms of domain architecture, HPr spans 1 to 90 (MLTIQFLCPL…EYIQVRFIDS (90 aa)). Histidine 15 acts as the Pros-phosphohistidine intermediate; for HPr activity in catalysis. Histidine 15 bears the Phosphohistidine; by EI mark. Residues 119 to 650 (GNVLASGVGV…AVKSQLRQLD (532 aa)) form a PTS EI region. Residue histidine 298 is the Tele-phosphohistidine intermediate; for PTS EI activity of the active site. Histidine 298 carries the phosphohistidine; by autocatalysis modification. The phosphoenolpyruvate site is built by arginine 405 and arginine 441. Mg(2+)-binding residues include glutamate 540 and aspartate 564. Residues 563–564 (ND) and arginine 574 contribute to the phosphoenolpyruvate site. Catalysis depends on cysteine 611, which acts as the Proton donor; for EI activity. The PTS EIIA type-2 domain occupies 685 to 828 (PLLALENIFV…QSILTLLETE (144 aa)). Residue histidine 747 is the Tele-phosphohistidine intermediate; for PTS EIIA activity of the active site. Histidine 747 bears the Phosphohistidine; by HPr mark.

This sequence belongs to the PEP-utilizing enzyme family. It depends on Mg(2+) as a cofactor.

It is found in the cytoplasm. The catalysed reaction is L-histidyl-[protein] + phosphoenolpyruvate = N(pros)-phospho-L-histidyl-[protein] + pyruvate. It carries out the reaction D-fructose(out) + N(pros)-phospho-L-histidyl-[protein] = D-fructose 1-phosphate(in) + L-histidyl-[protein]. Functionally, multifunctional protein that includes general (non sugar-specific) and sugar-specific components of the phosphoenolpyruvate-dependent sugar phosphotransferase system (sugar PTS). This major carbohydrate active transport system catalyzes the phosphorylation of incoming sugar substrates concomitantly with their translocation across the cell membrane. The enzyme II FryABC PTS system is involved in fructose transport. The polypeptide is Multiphosphoryl transfer protein 1 (fryA) (Escherichia coli (strain K12)).